The chain runs to 746 residues: Iron-sulfur clusters transporter ABCB7, mitochondrial (746 aa).

The N-terminal 19 residues, 1 to 19 (MAPMLVSLNCGIRVQRRTL), are a transit peptide targeting the mitochondrion. Residues 20 to 133 (TLLIRQTSSY…KDRPDLRARV (114 aa)) are Mitochondrial matrix-facing. In terms of domain architecture, ABC transmembrane type-1 spans 133-429 (VAVSLGLLAG…LGTVYRETRQ (297 aa)). A helical membrane pass occupies residues 134–154 (AVSLGLLAGAKLTNVMVPFMF). Residues 155–176 (KYAVDELNQMSGHMLNLNDAPS) are Mitochondrial intermembrane-facing. A helical membrane pass occupies residues 177 to 199 (TVATMTTAVLIGYGVSRAGSALF). The Mitochondrial matrix portion of the chain corresponds to 200–252 (NELRNTVFGKVAQSSIRRIAKNVFLHLHNLDLGFHLSRQTGALSKAIDRGTRG). A helical membrane pass occupies residues 253–273 (ISFVLSALVFNLGPTVFEMFL). Over 274–283 (VSAILYYKCG) the chain is Mitochondrial intermembrane. The helical transmembrane segment at 284–304 (GEFAAVALGTLSAYTIFTILV) threads the bilayer. Residues 305–375 (TQWRTRFRIE…TLAMLNFGQS (71 aa)) lie on the Mitochondrial matrix side of the membrane. Glutathione is bound by residues 308-312 (RTRFR) and 371-374 (NFGQ). A helical membrane pass occupies residues 376–396 (AIFSVGLTAIMLLASKGIAAG). Over 397-402 (NMTVGD) the chain is Mitochondrial intermembrane. The chain crosses the membrane as a helical span at residues 403–423 (LVMVNGLLFQLSLPLNFLGTV). Residue Gly-421 coordinates glutathione. Topologically, residues 424 to 746 (YRETRQALID…SVKGCGNCSC (323 aa)) are mitochondrial matrix. Residues 465-699 (IRFEDVYFEY…PGSLYAELWN (235 aa)) enclose the ABC transporter domain. Residues Tyr-474 and 498-505 (GGSGSGKS) each bind ATP. Residues 708 to 728 (SRKSSSAPAAERLSQKEEERK) form a disordered region.

This sequence belongs to the ABC transporter superfamily. ABCB family. Heavy Metal importer (TC 3.A.1.210) subfamily. Homodimer.

It is found in the mitochondrion inner membrane. Its subcellular location is the mitochondrion. The enzyme catalyses (glutathione)4[2Fe(III)-2S] cluster(in) + ATP + H2O = (glutathione)4[2Fe(III)-2S] cluster(out) + ADP + phosphate + H(+). Functionally, exports glutathione-coordinated iron-sulfur clusters such as [2Fe-2S]-(GS)4 cluster from the mitochondria to the cytosol in an ATP-dependent manner allowing the assembly of the cytosolic iron-sulfur (Fe/S) cluster-containing proteins and participates in iron homeostasis. May play a role in iron and lipid metabolism. This chain is Iron-sulfur clusters transporter ABCB7, mitochondrial, found in Oryzias latipes (Japanese rice fish).